A 230-amino-acid chain; its full sequence is Response regulator MprA (230 aa).

The region spanning 4–118 (RILVVDDDRA…ELLARMRALL (115 aa)) is the Response regulatory domain. Position 48 is a 4-aspartylphosphate (aspartate 48). The segment at residues 129–227 (SMAMRFSDLT…VRGVGYVLRE (99 aa)) is a DNA-binding region (ompR/PhoB-type).

In terms of assembly, monomer. Interaction with each conserved 8-bp repeat requires tandem binding by two protein monomers. In terms of processing, phosphorylated and dephosphorylated by MprB.

Its subcellular location is the cytoplasm. Its function is as follows. Member of the two-component regulatory system MprB/MprA which contributes to maintaining a balance among several systems involved in stress resistance and is required for establishment and maintenance of persistent infection in the host. Functions as a transcriptional regulator that recognizes a 19-bp nucleotide motif comprizing two loosely conserved 8-bp direct DNA-binding motif repeats separated by a 3-bp spacer region. MprB/MprA up-regulates expression of mprA and pepD. In Mycobacterium bovis (strain ATCC BAA-935 / AF2122/97), this protein is Response regulator MprA (mprA).